A 172-amino-acid chain; its full sequence is 3-hydroxydecanoyl-[acyl-carrier-protein] dehydratase (172 aa).

Residue His-71 is part of the active site.

It belongs to the thioester dehydratase family. FabA subfamily. As to quaternary structure, homodimer.

It is found in the cytoplasm. It catalyses the reaction a (3R)-hydroxyacyl-[ACP] = a (2E)-enoyl-[ACP] + H2O. The catalysed reaction is (3R)-hydroxydecanoyl-[ACP] = (2E)-decenoyl-[ACP] + H2O. It carries out the reaction (2E)-decenoyl-[ACP] = (3Z)-decenoyl-[ACP]. It functions in the pathway lipid metabolism; fatty acid biosynthesis. Functionally, necessary for the introduction of cis unsaturation into fatty acids. Catalyzes the dehydration of (3R)-3-hydroxydecanoyl-ACP to E-(2)-decenoyl-ACP and then its isomerization to Z-(3)-decenoyl-ACP. Can catalyze the dehydratase reaction for beta-hydroxyacyl-ACPs with saturated chain lengths up to 16:0, being most active on intermediate chain length. The protein is 3-hydroxydecanoyl-[acyl-carrier-protein] dehydratase of Escherichia coli O127:H6 (strain E2348/69 / EPEC).